Consider the following 342-residue polypeptide: Ketoreductase nvfG (342 aa).

This sequence belongs to the NAD(P)-dependent epimerase/dehydratase family. Dihydroflavonol-4-reductase subfamily.

The protein operates within secondary metabolite biosynthesis; terpenoid biosynthesis. In terms of biological role, ketoreductase; part of the gene cluster that mediates the biosynthesis of novofumigatonin, a heavily oxygenated meroterpenoid containing a unique orthoester moiety. The first step of the pathway is the synthesis of 3,5-dimethylorsellinic acid (DMOA) by the polyketide synthase nvfA via condensation of one acetyl-CoA starter unit with 3 malonyl-CoA units and 2 methylations. DMOA is then converted to farnesyl-DMOA by the farnesyltransferase nvfB. Epoxydation by FAD-dependent monooxygenase nvfK, followed by a protonation-initiated cyclization catalyzed by the terpene cyclase nvfL leads to the production of asnavolin H. The short chain dehydrogenase nvfC then as a 3-OH dehydrogenase of asnovolin H to yield chemesin D. There are two branches to synthesize asnovolin A from chemesin D. In one branch, chemesin D undergoes Baeyer-Villiger oxidation by nvfH, methylation by nvfJ, and enoyl reduction by the nvfM D enoylreductase that reduces the double bond between C-5'and C-6', to form respectively asnovolin I, asnovolin K, and asnovolin A. In the other branch, the methylation precedes the Baeyer-Villiger oxidation and the enoyl reduction to yield asnovolin A via the asnovolin J intermediate. Asnovolin A is further converted to fumigatonoid A by the Fe(II)/2-oxoglutarate-dependent dioxygenase nvfI that catalyzes an endoperoxidation reaction. The alpha/beta hydrolase nvfD then acts as an epimerase that converts fumigatonoid A to its C-5' epimer, which then undergoes spontaneous or nvfD-catalyzed lactonization. The following step utilizes the ketoreductase nvfG to produce fumigatonoid B. The dioxygenase nvfE further converts fumigatonoid B into fumigatonoid C. Finally the Fe(II)/2-oxoglutarate-dependent dioxygenase nvfF catalyzes two rounds of oxidation to transform fumigatonoid C into the end product, novofumigatonin A. The protein is Ketoreductase nvfG of Aspergillus novofumigatus (strain IBT 16806).